Consider the following 1012-residue polypeptide: AP-2 complex subunit alpha-1 (1012 aa).

HEAT repeat units follow at residues 254 to 289, 354 to 391, 393 to 430, and 525 to 565; these read AMRALQYFPTIEDPSTRKALFEVLQRILMGTDVVKN, DIIKKHQSQIITSLKDPDISIRRRALDLLYGMCDVSNA, DIVEELLQYLSTAEFSMREELSLKAAILAEKFAPDLSW, and PTIP…CIDV. A disordered region spans residues 652-678; that stretch reads STDPESVARSLSHPNGTLSNIDPQTPS. The segment covering 663–675 has biased composition (polar residues); the sequence is SHPNGTLSNIDPQ. Residues 742–841 form the GAE domain; sequence ALCLKDSGVL…LDFSYKFGAN (100 aa).

It belongs to the adaptor complexes large subunit family. As to quaternary structure, adaptor protein complex 2 (AP-2) is a heterotetramer composed of two large adaptins (alpha-type and beta-type subunits), a medium adaptin (mu-type subunit) and a small adaptin (sigma-type subunit). Binds to EPSIN2.

It localises to the membrane. The protein localises to the coated pit. In terms of biological role, subunit of the adaptor protein complex 2 (AP-2). Adaptor protein complexes function in protein transport via transport vesicles in different membrane traffic pathways. Adaptor protein complexes are vesicle coat components and appear to be involved in cargo selection and vesicle formation. AP-2 is involved in clathrin-dependent endocytosis in which cargo proteins are incorporated into vesicles surrounded by clathrin (clathrin-coated vesicles, CCVs) which are destined for fusion with the early endosome. The complex binds polyphosphoinositides. The polypeptide is AP-2 complex subunit alpha-1 (ALPHA-ADR) (Arabidopsis thaliana (Mouse-ear cress)).